Here is a 294-residue protein sequence, read N- to C-terminus: N-acetylmuramic acid 6-phosphate etherase (294 aa).

One can recognise an SIS domain in the interval 54-217 (VIKSFEEEGR…STASMIGVGK (164 aa)). Glu82 (proton donor) is an active-site residue. The active site involves Glu113.

This sequence belongs to the GCKR-like family. MurNAc-6-P etherase subfamily. In terms of assembly, homodimer.

The catalysed reaction is N-acetyl-D-muramate 6-phosphate + H2O = N-acetyl-D-glucosamine 6-phosphate + (R)-lactate. The protein operates within amino-sugar metabolism; N-acetylmuramate degradation. Its function is as follows. Specifically catalyzes the cleavage of the D-lactyl ether substituent of MurNAc 6-phosphate, producing GlcNAc 6-phosphate and D-lactate. The protein is N-acetylmuramic acid 6-phosphate etherase of Bacillus cereus (strain AH187).